Here is a 444-residue protein sequence, read N- to C-terminus: DNA repair protein RadA (444 aa).

The segment at 10–27 (CQECGYKSVKWLGKCPSC) adopts a C4-type zinc-finger fold. An ATP-binding site is contributed by 91 to 98 (GEPGIGKS). The RadA KNRFG motif motif lies at 247 to 251 (KNRFG). The lon-protease-like stretch occupies residues 345-444 (DVFVNVAGGM…HIQEAIEVLF (100 aa)).

Belongs to the RecA family. RadA subfamily.

DNA-dependent ATPase involved in processing of recombination intermediates, plays a role in repairing DNA breaks. Stimulates the branch migration of RecA-mediated strand transfer reactions, allowing the 3' invading strand to extend heteroduplex DNA faster. Binds ssDNA in the presence of ADP but not other nucleotides, has ATPase activity that is stimulated by ssDNA and various branched DNA structures, but inhibited by SSB. Does not have RecA's homology-searching function. This is DNA repair protein RadA from Aquifex aeolicus (strain VF5).